We begin with the raw amino-acid sequence, 502 residues long: Zinc finger C3HC-type protein 1 (502 aa).

An N-acetylalanine modification is found at Ala-2. A Phosphoserine modification is found at Ser-24. Position 28 is a phosphothreonine (Thr-28). The disordered stretch occupies residues 35–74 (LIDEGIAPEEGGVDAQDTSATSQSVNGSPQAEQPSLESTS). Polar residues predominate over residues 50-72 (QDTSATSQSVNGSPQAEQPSLES). Residues Ser-58 and Ser-62 each carry the phosphoserine modification. Thr-84 bears the Phosphothreonine mark. The C3HC-type zinc finger occupies 102–156 (CAKYGWVTVECDMLKCSSCQAFLCASLQPAFDFDRYKQRCAELKKALCTAHEKFC). Residues 302 to 423 (SSPIPGLEGR…SSRSFFDPTS (122 aa)) form a disordered region. Phosphoserine is present on residues Ser-321 and Ser-329. Phosphothreonine is present on Thr-333. A phosphoserine mark is found at Ser-338, Ser-344, Ser-354, Ser-359, and Ser-370. Residues 351–360 (RTRSWDSSSP) are compositionally biased toward polar residues. Residues 371 to 380 (PTTRTRPVTR) show a composition bias toward low complexity. The residue at position 381 (Ser-381) is a Phosphoserine. Position 384 is a phosphothreonine (Thr-384). Residue Ser-395 is modified to Phosphoserine. A Nuclear localization signal motif is present at residues 396 to 402 (PLRKAKR). 2 positions are modified to phosphoserine: Ser-407 and Ser-483. Low complexity predominate over residues 407 to 422 (SSSSSDTSSRSFFDPT).

As to quaternary structure, interacts with TPR; this interaction mediates ZC3HC1 nuclear envelopes (NE)-association but also required for proper positioning of a substantial amount of TPR at the nuclear basket (NB). Post-translationally, phosphorylated. May also be weakly phosphorylated on Tyr residues.

The protein resides in the nucleus. It is found in the nucleus envelope. Required for proper positioning of a substantial amount of TPR at the nuclear basket (NB) through interaction with TPR. The polypeptide is Zinc finger C3HC-type protein 1 (ZC3HC1) (Pongo abelii (Sumatran orangutan)).